A 1049-amino-acid chain; its full sequence is Dyslexia-associated protein KIAA0319-like protein (1049 aa).

The Cytoplasmic portion of the chain corresponds to 1-29; the sequence is MEKRLGVKPNPASWILSGYYWQTSAKWLR. The helical transmembrane segment at 30–50 threads the bilayer; the sequence is SLYLFYTCFCFSVLWLSTDAS. The MANSC domain occupies 49–127; that stretch reads ASESRCQQGK…AFRTHSSNSM (79 aa). The Extracellular portion of the chain corresponds to 51 to 932; the sequence is ESRCQQGKTQ…DSNCEWSVLY (882 aa). N-linked (GlcNAc...) asparagine glycans are attached at residues asparagine 247, asparagine 395, asparagine 472, asparagine 487, and asparagine 525. PKD domains are found at residues 312–401, 409–498, 504–594, 600–688, and 694–785; these read SAGE…VKPE, IAIV…VNKA, VANA…VQPE, QADA…VKEE, and IAKI…VKPD. A helical membrane pass occupies residues 933-953; it reads VIIATFVIVVALGILSWTVIC. Topologically, residues 954-1049 are cytoplasmic; sequence CCKRQKGKPK…KARSPREEIL (96 aa). The residue at position 974 (threonine 974) is a Phosphothreonine. A phosphoserine mark is found at serine 978, serine 1009, and serine 1031. The segment at 1022-1049 is disordered; the sequence is GKLLHGQNGSVPNGQTPLKARSPREEIL. Residues 1028-1037 are compositionally biased toward polar residues; it reads QNGSVPNGQT. Residue threonine 1037 is modified to Phosphothreonine.

Interacts with RTN4R. As to quaternary structure, (Microbial infection) Interacts with AAV-2 VP1. N-glycosylated. Expressed in cortical neurons in the brain cortex (at protein level).

Its subcellular location is the cytoplasmic granule membrane. The protein localises to the golgi apparatus membrane. It localises to the golgi apparatus. The protein resides in the trans-Golgi network membrane. It is found in the cell membrane. Possible role in axon guidance through interaction with RTN4R. Its function is as follows. (Microbial infection) Acts as a receptor for adeno-associated virus and is involved in adeno-associated virus infection through endocytosis system. This chain is Dyslexia-associated protein KIAA0319-like protein, found in Homo sapiens (Human).